The following is a 575-amino-acid chain: Aspartate--tRNA ligase (575 aa).

Residue Glu-169 participates in L-aspartate binding. An aspartate region spans residues Gln-193–Lys-196. Arg-215 is a binding site for L-aspartate. ATP is bound by residues Arg-215–Glu-217 and Gln-224. Position 438 (His-438) interacts with L-aspartate. Glu-472 contributes to the ATP binding site. L-aspartate is bound at residue Arg-479. Gly-524–Arg-527 is a binding site for ATP.

Belongs to the class-II aminoacyl-tRNA synthetase family. Type 1 subfamily. In terms of assembly, homodimer.

It is found in the cytoplasm. The catalysed reaction is tRNA(Asp) + L-aspartate + ATP = L-aspartyl-tRNA(Asp) + AMP + diphosphate. In terms of biological role, catalyzes the attachment of L-aspartate to tRNA(Asp) in a two-step reaction: L-aspartate is first activated by ATP to form Asp-AMP and then transferred to the acceptor end of tRNA(Asp). The sequence is that of Aspartate--tRNA ligase from Mycoplasma capricolum subsp. capricolum (strain California kid / ATCC 27343 / NCTC 10154).